A 421-amino-acid polypeptide reads, in one-letter code: Gamma-glutamyl phosphate reductase (421 aa).

Belongs to the gamma-glutamyl phosphate reductase family.

It is found in the cytoplasm. It catalyses the reaction L-glutamate 5-semialdehyde + phosphate + NADP(+) = L-glutamyl 5-phosphate + NADPH + H(+). The protein operates within amino-acid biosynthesis; L-proline biosynthesis; L-glutamate 5-semialdehyde from L-glutamate: step 2/2. Functionally, catalyzes the NADPH-dependent reduction of L-glutamate 5-phosphate into L-glutamate 5-semialdehyde and phosphate. The product spontaneously undergoes cyclization to form 1-pyrroline-5-carboxylate. The chain is Gamma-glutamyl phosphate reductase from Leifsonia xyli subsp. xyli (strain CTCB07).